We begin with the raw amino-acid sequence, 344 residues long: L-threonine 3-dehydrogenase (344 aa).

Position 38 (Cys38) interacts with Zn(2+). Residues Thr40 and His43 each act as charge relay system in the active site. His63, Glu64, Cys93, Cys96, Cys99, and Cys107 together coordinate Zn(2+). Residues Ile175, Asp195, Arg200, 263–265, and 287–288 each bind NAD(+); these read LGI and IY.

This sequence belongs to the zinc-containing alcohol dehydrogenase family. Homotetramer. Zn(2+) serves as cofactor.

The protein resides in the cytoplasm. It catalyses the reaction L-threonine + NAD(+) = (2S)-2-amino-3-oxobutanoate + NADH + H(+). Its pathway is amino-acid degradation; L-threonine degradation via oxydo-reductase pathway; glycine from L-threonine: step 1/2. Catalyzes the NAD(+)-dependent oxidation of L-threonine to 2-amino-3-ketobutyrate. The chain is L-threonine 3-dehydrogenase from Deinococcus deserti (strain DSM 17065 / CIP 109153 / LMG 22923 / VCD115).